The following is a 735-amino-acid chain: Catalase-peroxidase (735 aa).

Residues Met-1–Asp-25 are disordered. The tryptophyl-tyrosyl-methioninium (Trp-Tyr) (with M-249) cross-link spans Trp-95–Tyr-223. The active-site Proton acceptor is the His-96. Residues Tyr-223–Met-249 constitute a cross-link (tryptophyl-tyrosyl-methioninium (Tyr-Met) (with W-95)). Residue His-264 coordinates heme b.

This sequence belongs to the peroxidase family. Peroxidase/catalase subfamily. As to quaternary structure, homodimer or homotetramer. Requires heme b as cofactor. In terms of processing, formation of the three residue Trp-Tyr-Met cross-link is important for the catalase, but not the peroxidase activity of the enzyme.

The enzyme catalyses H2O2 + AH2 = A + 2 H2O. It catalyses the reaction 2 H2O2 = O2 + 2 H2O. Its function is as follows. Bifunctional enzyme with both catalase and broad-spectrum peroxidase activity. The polypeptide is Catalase-peroxidase (Trichlorobacter lovleyi (strain ATCC BAA-1151 / DSM 17278 / SZ) (Geobacter lovleyi)).